Reading from the N-terminus, the 575-residue chain is Potassium-transporting ATPase potassium-binding subunit (575 aa).

12 consecutive transmembrane segments (helical) span residues 4–24 (SAWG…WPVG), 61–81 (LRYA…VYAL), 133–153 (GLAV…FALI), 180–200 (LWVL…QGVI), 258–278 (LANL…CFAF), 289–309 (WAVL…VIPA), 344–364 (IDAS…AVIA), 372–392 (LGGM…GGVG), 394–414 (GLYG…LMIG), 431–451 (LISI…AVAV), 499–519 (LLGL…LAIA), and 545–565 (LLIG…LALG).

Belongs to the KdpA family. The system is composed of three essential subunits: KdpA, KdpB and KdpC.

It localises to the cell inner membrane. Functionally, part of the high-affinity ATP-driven potassium transport (or Kdp) system, which catalyzes the hydrolysis of ATP coupled with the electrogenic transport of potassium into the cytoplasm. This subunit binds the periplasmic potassium ions and delivers the ions to the membrane domain of KdpB through an intramembrane tunnel. This chain is Potassium-transporting ATPase potassium-binding subunit, found in Variovorax paradoxus (strain S110).